Here is a 265-residue protein sequence, read N- to C-terminus: 4-hydroxy-tetrahydrodipicolinate reductase (265 aa).

16–21 (GANGKM) serves as a coordination point for NAD(+). An NADP(+)-binding site is contributed by Arg-43. Residues 106–108 (GTT) and 130–133 (SENF) contribute to the NAD(+) site. The Proton donor/acceptor role is filled by His-164. A (S)-2,3,4,5-tetrahydrodipicolinate-binding site is contributed by His-165. Lys-168 serves as the catalytic Proton donor. Residue 174–175 (AT) participates in (S)-2,3,4,5-tetrahydrodipicolinate binding.

Belongs to the DapB family. As to quaternary structure, homotetramer.

It is found in the cytoplasm. The enzyme catalyses (S)-2,3,4,5-tetrahydrodipicolinate + NAD(+) + H2O = (2S,4S)-4-hydroxy-2,3,4,5-tetrahydrodipicolinate + NADH + H(+). It catalyses the reaction (S)-2,3,4,5-tetrahydrodipicolinate + NADP(+) + H2O = (2S,4S)-4-hydroxy-2,3,4,5-tetrahydrodipicolinate + NADPH + H(+). The protein operates within amino-acid biosynthesis; L-lysine biosynthesis via DAP pathway; (S)-tetrahydrodipicolinate from L-aspartate: step 4/4. Functionally, catalyzes the conversion of 4-hydroxy-tetrahydrodipicolinate (HTPA) to tetrahydrodipicolinate. This Wigglesworthia glossinidia brevipalpis protein is 4-hydroxy-tetrahydrodipicolinate reductase.